The following is a 212-amino-acid chain: Nitrogen regulatory protein P-II homolog (212 aa).

3 stretches are compositionally biased toward low complexity: residues 1–12 (MSSPATAAAAAA), 32–46 (TTTT…SRSR), and 63–74 (PPTAARAQSAAA). Residues 1 to 68 (MSSPATAAAA…PRRLPPTAAR (68 aa)) constitute a chloroplast transit peptide. The disordered stretch occupies residues 1–74 (MSSPATAAAA…TAARAQSAAA (74 aa)). Residues 117–121 (GFGAQ) and 170–173 (GDGK) each bind ATP. Glycine 119 contributes to the Mg(2+) binding site.

This sequence belongs to the P(II) protein family. As to quaternary structure, homodimer.

It localises to the plastid. The protein resides in the chloroplast. In terms of biological role, participates in sensing carbon and organic nitrogen status and regulates some steps of primary carbon and nitrogen metabolism. This chain is Nitrogen regulatory protein P-II homolog (GLB), found in Oryza sativa subsp. japonica (Rice).